Reading from the N-terminus, the 35-residue chain is MEALVYTFLLVSTLGIIFFAIFFREPPKILTKKMK.

Residues 3–23 (ALVYTFLLVSTLGIIFFAIFF) traverse the membrane as a helical segment.

This sequence belongs to the PsbT family. PSII is composed of 1 copy each of membrane proteins PsbA, PsbB, PsbC, PsbD, PsbE, PsbF, PsbH, PsbI, PsbJ, PsbK, PsbL, PsbM, PsbT, PsbY, PsbZ, Psb30/Ycf12, at least 3 peripheral proteins of the oxygen-evolving complex and a large number of cofactors. It forms dimeric complexes.

It is found in the plastid. It localises to the chloroplast thylakoid membrane. Its function is as follows. Found at the monomer-monomer interface of the photosystem II (PS II) dimer, plays a role in assembly and dimerization of PSII. PSII is a light-driven water plastoquinone oxidoreductase, using light energy to abstract electrons from H(2)O, generating a proton gradient subsequently used for ATP formation. This Gossypium barbadense (Sea Island cotton) protein is Photosystem II reaction center protein T.